The following is a 60-amino-acid chain: Large ribosomal subunit protein bL32 (60 aa).

Belongs to the bacterial ribosomal protein bL32 family.

This Clostridium perfringens (strain ATCC 13124 / DSM 756 / JCM 1290 / NCIMB 6125 / NCTC 8237 / Type A) protein is Large ribosomal subunit protein bL32.